A 109-amino-acid chain; its full sequence is Glutaredoxin-8 (109 aa).

The Glutaredoxin domain maps to 5–109 (VTKAEEMIKS…EELTKIGLLP (105 aa)). Residues cysteine 25 and cysteine 28 are joined by a disulfide bond.

It belongs to the glutaredoxin family. In terms of assembly, monomer.

It is found in the cytoplasm. Its function is as follows. Glutathione-dependent oxidoreductase with lower activity compared to the other members of the glutaredoxin family. The disulfide bond functions as an electron carrier in the glutathione-dependent synthesis of deoxyribonucleotides by the enzyme ribonucleotide reductase. The polypeptide is Glutaredoxin-8 (GRX8) (Saccharomyces cerevisiae (strain ATCC 204508 / S288c) (Baker's yeast)).